A 58-amino-acid polypeptide reads, in one-letter code: Alpha-conotoxin AuIB (58 aa).

Residues 1-16 form the signal peptide; the sequence is MFTVFLLVVLATTVVS. A propeptide spanning residues 17-39 is cleaved from the precursor; the sequence is FTSDRASDGRKDAASGLIALTMK. Cystine bridges form between cysteine 41–cysteine 47 and cysteine 42–cysteine 54. Cysteine 54 bears the Cysteine amide mark.

In terms of tissue distribution, expressed by the venom duct.

It is found in the secreted. In terms of biological role, alpha-conotoxins act on postsynaptic membranes, they bind to the nicotinic acetylcholine receptors (nAChR) and thus inhibit them. This toxin blocks mammalian nAChR alpha-3-beta-4/CHRNA3-CHRNB4 subunits. Also exhibits inhibition of D.melanogaster alpha-7/CHRNA7 nAChRs. The polypeptide is Alpha-conotoxin AuIB (Conus aulicus (Princely cone)).